The sequence spans 873 residues: Bifunctional uridylyltransferase/uridylyl-removing enzyme (873 aa).

The interval 1-332 is uridylyltransferase; sequence MKYLSPLSLS…HQGEQDDAII (332 aa). Positions 333–692 are uridylyl-removing; that stretch reads IDDDFQRRGR…ISKNASRGGT (360 aa). In terms of domain architecture, HD spans 451–573; that stretch reads VDEHSIRLLK…VRDEERLDYL (123 aa). 2 ACT domains span residues 693 to 777 and 800 to 873; these read EIFV…RPPR and LMEF…RLSS.

This sequence belongs to the GlnD family. Mg(2+) serves as cofactor.

The enzyme catalyses [protein-PII]-L-tyrosine + UTP = [protein-PII]-uridylyl-L-tyrosine + diphosphate. The catalysed reaction is [protein-PII]-uridylyl-L-tyrosine + H2O = [protein-PII]-L-tyrosine + UMP + H(+). With respect to regulation, uridylyltransferase (UTase) activity is inhibited by glutamine, while glutamine activates uridylyl-removing (UR) activity. Modifies, by uridylylation and deuridylylation, the PII regulatory proteins (GlnB and homologs), in response to the nitrogen status of the cell that GlnD senses through the glutamine level. Under low glutamine levels, catalyzes the conversion of the PII proteins and UTP to PII-UMP and PPi, while under higher glutamine levels, GlnD hydrolyzes PII-UMP to PII and UMP (deuridylylation). Thus, controls uridylylation state and activity of the PII proteins, and plays an important role in the regulation of nitrogen assimilation and metabolism. The polypeptide is Bifunctional uridylyltransferase/uridylyl-removing enzyme (Aliivibrio fischeri (strain ATCC 700601 / ES114) (Vibrio fischeri)).